Reading from the N-terminus, the 289-residue chain is MLRDLFVKKKKYAAIPSEQVRKDVPDGVMTKCPKCKKIMYTKELLKNLKVCVNCGYHHPMNAWERLDSILDEGSFREYDKEMVSLNPLEFPGYEEKLESDRKKTELNEAVVTGEGTIDDMLVVVAVMDSRFRMGSMGSVVGEKIARAVEKAYDLQVPFIIFTASGGARMQEGILSLMQMAKTSVALKKHSNAGGLFISVMTHPTTGGVSASFASLGDYNLAEPGALIGFAGRRVIEQTVREKLPEDFQTAEFLLEHGQLDAVVHRDDMRESLRKILEVHQGGEMAVWQS.

The 262-residue stretch at 28–289 folds into the CoA carboxyltransferase N-terminal domain; that stretch reads VMTKCPKCKK…QGGEMAVWQS (262 aa). Zn(2+)-binding residues include C32, C35, C51, and C54. Residues 32 to 54 form a C4-type zinc finger; the sequence is CPKCKKIMYTKELLKNLKVCVNC.

It belongs to the AccD/PCCB family. As to quaternary structure, acetyl-CoA carboxylase is a heterohexamer composed of biotin carboxyl carrier protein (AccB), biotin carboxylase (AccC) and two subunits each of ACCase subunit alpha (AccA) and ACCase subunit beta (AccD). Zn(2+) serves as cofactor.

It localises to the cytoplasm. It catalyses the reaction N(6)-carboxybiotinyl-L-lysyl-[protein] + acetyl-CoA = N(6)-biotinyl-L-lysyl-[protein] + malonyl-CoA. Its pathway is lipid metabolism; malonyl-CoA biosynthesis; malonyl-CoA from acetyl-CoA: step 1/1. Functionally, component of the acetyl coenzyme A carboxylase (ACC) complex. Biotin carboxylase (BC) catalyzes the carboxylation of biotin on its carrier protein (BCCP) and then the CO(2) group is transferred by the transcarboxylase to acetyl-CoA to form malonyl-CoA. This chain is Acetyl-coenzyme A carboxylase carboxyl transferase subunit beta, found in Bacillus cereus (strain ATCC 10987 / NRS 248).